Consider the following 751-residue polypeptide: Disintegrin and metalloproteinase domain-containing protein 2 (751 aa).

Positions 1–16 are cleaved as a signal peptide; the sequence is MLRVLFLLCGLSGLRT. The propeptide occupies 17–173; it reads KENSERLHVQ…PYKVQSVQPR (157 aa). Residues 17 to 702 are Extracellular-facing; that stretch reads KENSERLHVQ…DVYQTAKPTR (686 aa). 4 N-linked (GlcNAc...) asparagine glycosylation sites follow: Asn122, Asn147, Asn219, and Asn289. Positions 177–374 constitute a Peptidase M12B domain; that stretch reads QYIEMHVVVE…QKSQCLQNLP (198 aa). Cystine bridges form between Cys286-Cys369, Cys328-Cys353, and Cys330-Cys335. N-linked (GlcNAc...) asparagine glycosylation is found at Asn352, Asn434, Asn458, Asn559, and Asn566. Positions 383 to 472 constitute a Disintegrin domain; the sequence is DAVCGNSIVE…LCPDDIVIQN (90 aa). A disulfide bridge links Cys444 with Cys464. In terms of domain architecture, EGF-like spans 612 to 645; the sequence is VNLGCTLQNCNNQGICNSLQHCHCNPTFLPPNCS. Cystine bridges form between Cys616-Cys627, Cys621-Cys633, and Cys635-Cys644. An N-linked (GlcNAc...) asparagine glycan is attached at Asn643. Residues 703–723 form a helical membrane-spanning segment; sequence WPFFLLIPFFIILGALIAILV. Residues 724 to 751 lie on the Cytoplasmic side of the membrane; the sequence is KVQFQRKKWKTEDYTSDEQFESDSELKE. Ser745 carries the phosphoserine modification.

In terms of assembly, heterodimer with ADAM1/fertilin subunit alpha. The signal and the metalloprotease domain are cleaved during the epididymal maturation of the spermatozoa. In terms of tissue distribution, expressed specifically in testis.

It localises to the membrane. In terms of biological role, sperm surface membrane protein that may be involved in sperm-egg plasma membrane adhesion and fusion during fertilization. Could have a direct role in sperm-zona binding or migration of sperm from the uterus into the oviduct. Interactions with egg membrane could be mediated via binding between its disintegrin-like domain to one or more integrins receptors on the egg. This is a non catalytic metalloprotease-like protein. The polypeptide is Disintegrin and metalloproteinase domain-containing protein 2 (ADAM2) (Oryctolagus cuniculus (Rabbit)).